We begin with the raw amino-acid sequence, 268 residues long: Gasdermin bGSDM (268 aa).

C3 is lipidated: S-palmitoyl cysteine. A run of 4 beta stranded transmembrane segments spans residues 78 to 94 (IDLR…AAKI), 103 to 121 (APSF…FHIE), 168 to 185 (KMRM…GVDV), and 195 to 211 (AKLE…RLVF). A C-terminal region region spans residues 248-268 (GENMALNLFTEIQDAGFIEVT).

This sequence belongs to the bacterial gasdermin family. As to quaternary structure, monomer in solution. In terms of assembly, forms large, homooligomeric ring-shaped pores when inserted in membranes. Cleavage by the adjacently encoded protease (G563DRAFT_02009) between Leu-247 and Gly-248 relieves autoinhibition, releasing the N-terminus which initiates loss of cell integrity. In terms of processing, palmitoylation helps stabilize the inactive state; may self-palmitoylate. Palmitoylation is not required for permeabilization of liposomes by the ring-like pores in vitro. Palmitoylation plays a significant role in pore formation.

The protein resides in the cytoplasm. The protein localises to the cell inner membrane. The full-length protein before cleavage is inactive: intramolecular interactions between the N-terminal domain and the C-terminal region, as well as the lipid modification, mediate autoinhibition. The pyroptosis-like-inducing activity is carried by the released N-terminal domain (gasdermin bGSDM, N-terminus). In terms of biological role, precursor of a pore-forming protein involved in defense against bacteriophages. Cleavage of this precursor by its dedicated, neighboring protease (G563DRAFT_02009) releases the active moiety (gasdermin bGSDM, N-terminus) which inserts into membranes, forming pores and triggering cell death. Expression of bGSDM and its protease is highly toxic in E.coli. Cells expressing the gene pair stop dividing and lose membrane integrity. Both proteins are required to kill E.coli. Its function is as follows. Pore-forming protein that causes membrane permeabilization via a pyroptosis-like activity. Makes ring-like pores with walls about 50 Angstroms thick and an interior pore diameter of 200-300 Angstroms, when integrated in liposomes. This is Gasdermin bGSDM from Runella zeae (strain ATCC BAA-293 / DSM 19591 / LMG 21438 / NS12).